Consider the following 256-residue polypeptide: Imidazole glycerol phosphate synthase subunit HisF (256 aa).

Catalysis depends on residues aspartate 11 and aspartate 130.

The protein belongs to the HisA/HisF family. As to quaternary structure, heterodimer of HisH and HisF.

The protein localises to the cytoplasm. The catalysed reaction is 5-[(5-phospho-1-deoxy-D-ribulos-1-ylimino)methylamino]-1-(5-phospho-beta-D-ribosyl)imidazole-4-carboxamide + L-glutamine = D-erythro-1-(imidazol-4-yl)glycerol 3-phosphate + 5-amino-1-(5-phospho-beta-D-ribosyl)imidazole-4-carboxamide + L-glutamate + H(+). Its pathway is amino-acid biosynthesis; L-histidine biosynthesis; L-histidine from 5-phospho-alpha-D-ribose 1-diphosphate: step 5/9. Functionally, IGPS catalyzes the conversion of PRFAR and glutamine to IGP, AICAR and glutamate. The HisF subunit catalyzes the cyclization activity that produces IGP and AICAR from PRFAR using the ammonia provided by the HisH subunit. This is Imidazole glycerol phosphate synthase subunit HisF from Prochlorococcus marinus (strain MIT 9301).